Here is a 273-residue protein sequence, read N- to C-terminus: 4-hydroxy-tetrahydrodipicolinate reductase (273 aa).

Residue 12–17 participates in NAD(+) binding; the sequence is GAGGRM. Arginine 39 provides a ligand contact to NADP(+). Residues 102-104 and 126-129 contribute to the NAD(+) site; these read GTT and AANF. Catalysis depends on histidine 159, which acts as the Proton donor/acceptor. Position 160 (histidine 160) interacts with (S)-2,3,4,5-tetrahydrodipicolinate. The Proton donor role is filled by lysine 163. A (S)-2,3,4,5-tetrahydrodipicolinate-binding site is contributed by 169 to 170; the sequence is GT.

The protein belongs to the DapB family. Homotetramer.

The protein resides in the cytoplasm. The catalysed reaction is (S)-2,3,4,5-tetrahydrodipicolinate + NAD(+) + H2O = (2S,4S)-4-hydroxy-2,3,4,5-tetrahydrodipicolinate + NADH + H(+). It carries out the reaction (S)-2,3,4,5-tetrahydrodipicolinate + NADP(+) + H2O = (2S,4S)-4-hydroxy-2,3,4,5-tetrahydrodipicolinate + NADPH + H(+). The protein operates within amino-acid biosynthesis; L-lysine biosynthesis via DAP pathway; (S)-tetrahydrodipicolinate from L-aspartate: step 4/4. Its function is as follows. Catalyzes the conversion of 4-hydroxy-tetrahydrodipicolinate (HTPA) to tetrahydrodipicolinate. This chain is 4-hydroxy-tetrahydrodipicolinate reductase, found in Sodalis glossinidius (strain morsitans).